A 178-amino-acid chain; its full sequence is Translation initiation factor IF-3 (178 aa).

Positions 1 to 20 (MRRPFRATPVQKDGPRSNRD) are disordered.

It belongs to the IF-3 family. As to quaternary structure, monomer.

The protein resides in the cytoplasm. Its function is as follows. IF-3 binds to the 30S ribosomal subunit and shifts the equilibrium between 70S ribosomes and their 50S and 30S subunits in favor of the free subunits, thus enhancing the availability of 30S subunits on which protein synthesis initiation begins. This is Translation initiation factor IF-3 from Brucella abortus biovar 1 (strain 9-941).